A 130-amino-acid polypeptide reads, in one-letter code: Small ribosomal subunit protein uS11 (130 aa).

This sequence belongs to the universal ribosomal protein uS11 family. In terms of assembly, part of the 30S ribosomal subunit. Interacts with proteins S7 and S18. Binds to IF-3.

Functionally, located on the platform of the 30S subunit, it bridges several disparate RNA helices of the 16S rRNA. Forms part of the Shine-Dalgarno cleft in the 70S ribosome. This chain is Small ribosomal subunit protein uS11, found in Moorella thermoacetica (strain ATCC 39073 / JCM 9320).